The chain runs to 555 residues: Coiled-coil domain-containing protein 102A (555 aa).

Disordered stretches follow at residues 1 to 68 (MSHG…ADGD), 136 to 202 (LAGA…GSQE), and 214 to 254 (PEEP…EEDA). Residues S12, S26, and S28 each carry the phosphoserine modification. Over residues 37-61 (SLPPTPPSGTPSPGPPPALPLPPTP) the composition is skewed to pro residues. A coiled-coil region spans residues 72 to 161 (REELRLRELE…ARGRELARLR (90 aa)). Basic and acidic residues-rich tracts occupy residues 136–159 (LAGARRERQEAQGESEARGRELAR) and 166–183 (GVDRTPDGPETEPEREQE). The segment covering 224–236 (RSAGAGAPRGSSG) has biased composition (low complexity). Coiled-coil stretches lie at residues 268 to 401 (QKVL…RRQT) and 432 to 522 (KLKK…QNAP). Residues 478–555 (ELDEAHNQAR…EDEDLQIQVA (78 aa)) form a disordered region. Residues 536–555 (EAGDGASDLDEDEDLQIQVA) show a composition bias toward acidic residues. A Phosphoserine modification is found at S542.

In Bos taurus (Bovine), this protein is Coiled-coil domain-containing protein 102A (CCDC102A).